Reading from the N-terminus, the 664-residue chain is Probable L-type lectin-domain containing receptor kinase V.3 (664 aa).

The N-terminal stretch at 1–26 (MSMSCKINWLMVLVIIALSNLESSLG) is a signal peptide. Residues 27 to 278 (RLVFEGSAGL…YPKAESQVKL (252 aa)) are Extracellular-facing. Residues 28 to 250 (LVFEGSAGLM…AIHYMWMWYV (223 aa)) are legume-lectin like. Asn-69, Asn-116, Asn-122, Asn-174, and Asn-197 each carry an N-linked (GlcNAc...) asparagine glycan. Residues 279–299 (IVLVTFLTLALFVALAASALI) traverse the membrane as a helical segment. At 300 to 664 (VFFYKRHKKL…LPSGRPRLFL (365 aa)) the chain is on the cytoplasmic side. Residues 335–617 (NGFKQLLGEG…GVSELPDNLL (283 aa)) form the Protein kinase domain. ATP is bound by residues 341-349 (LGEGGFGPV) and Lys-364. Asp-461 acts as the Proton acceptor in catalysis.

This sequence in the C-terminal section; belongs to the protein kinase superfamily. Ser/Thr protein kinase family. It in the N-terminal section; belongs to the leguminous lectin family.

Its subcellular location is the cell membrane. The enzyme catalyses L-seryl-[protein] + ATP = O-phospho-L-seryl-[protein] + ADP + H(+). It catalyses the reaction L-threonyl-[protein] + ATP = O-phospho-L-threonyl-[protein] + ADP + H(+). This chain is Probable L-type lectin-domain containing receptor kinase V.3 (LECRK53), found in Arabidopsis thaliana (Mouse-ear cress).